A 160-amino-acid chain; its full sequence is Phosphopantetheine adenylyltransferase (160 aa).

T9 is a substrate binding site. Residues 9–10 and H17 contribute to the ATP site; that span reads TF. Positions 41, 73, and 87 each coordinate substrate. Residues 88–90, E98, and 123–129 each bind ATP; these read GLR and LSYISST.

The protein belongs to the bacterial CoaD family. As to quaternary structure, homohexamer. Mg(2+) serves as cofactor.

The protein localises to the cytoplasm. It catalyses the reaction (R)-4'-phosphopantetheine + ATP + H(+) = 3'-dephospho-CoA + diphosphate. It functions in the pathway cofactor biosynthesis; coenzyme A biosynthesis; CoA from (R)-pantothenate: step 4/5. Reversibly transfers an adenylyl group from ATP to 4'-phosphopantetheine, yielding dephospho-CoA (dPCoA) and pyrophosphate. The sequence is that of Phosphopantetheine adenylyltransferase from Marinobacter nauticus (strain ATCC 700491 / DSM 11845 / VT8) (Marinobacter aquaeolei).